Here is a 279-residue protein sequence, read N- to C-terminus: Coiled-coil domain-containing protein 106 (279 aa).

A coiled-coil region spans residues 62–101 (KAQLHMALERNSWLQKRIEDLEEERDFLRCQLDKFISSAR). Basic and acidic residues predominate over residues 109 to 121 (RMKPGPRRVDGDS). The segment at 109 to 173 (RMKPGPRRVD…FGKTKARERQ (65 aa)) is disordered. S129 is subject to Phosphoserine. Positions 151–164 (KRQKQKGSTSRKRF) match the Bipartite nuclear localization signal motif. The span at 151-167 (KRQKQKGSTSRKRFGKT) shows a compositional bias: basic residues.

As to quaternary structure, interacts with p53/TP53.

The protein resides in the nucleus. Its function is as follows. Promotes the degradation of p53/TP53 protein and inhibits its transactivity. The chain is Coiled-coil domain-containing protein 106 (Ccdc106) from Mus musculus (Mouse).